Here is a 427-residue protein sequence, read N- to C-terminus: NADH-quinone oxidoreductase subunit 14 (427 aa).

Helical transmembrane passes span 1–21, 30–50, 57–77, 79–99, 104–124, 137–157, 172–192, 204–224, 230–250, 257–277, 280–300, 322–342, 360–380, and 400–420; these read MTLA…FVLP, LLGL…PFAF, GVSQ…VGLV, SGRF…HLLA, LLLM…LATW, FLLG…FYGA, YALA…LAPF, PTPV…AALL, PEAL…AALA, LLAY…YTGN, ALGF…AVLS, LGLA…LAGF, VLVL…GLGL, and AAVV…GLVL.

Belongs to the complex I subunit 2 family. In terms of assembly, NDH-1 is composed of 15 different subunits, Nqo1 to Nqo15. The complex has a L-shaped structure, with the hydrophobic arm (subunits Nqo7, Nqo8 and Nqo10 to Nqo14) embedded in the membrane and the hydrophilic peripheral arm (subunits Nqo1 to Nqo6, Nqo9 and Nqo15) protruding into the bacterial cytoplasm. The hydrophilic domain contains all the redox centers.

Its subcellular location is the cell inner membrane. It carries out the reaction a quinone + NADH + 5 H(+)(in) = a quinol + NAD(+) + 4 H(+)(out). Its function is as follows. NDH-1 shuttles electrons from NADH, via FMN and iron-sulfur (Fe-S) centers, to quinones in the respiratory chain. The immediate electron acceptor for the enzyme in this species is menaquinone. Couples the redox reaction to proton translocation (for every two electrons transferred, four hydrogen ions are translocated across the cytoplasmic membrane), and thus conserves the redox energy in a proton gradient required for the synthesis of ATP. The sequence is that of NADH-quinone oxidoreductase subunit 14 (nqo14) from Thermus thermophilus (strain ATCC 27634 / DSM 579 / HB8).